Consider the following 260-residue polypeptide: Small ribosomal subunit protein uS2 (260 aa).

Residues 225–260 (KGQTQTEAAPNAQAAPEAAAPAEQPAEEAAAASSEG) form a disordered region. Over residues 231 to 260 (EAAPNAQAAPEAAAPAEQPAEEAAAASSEG) the composition is skewed to low complexity.

This sequence belongs to the universal ribosomal protein uS2 family.

The protein is Small ribosomal subunit protein uS2 of Rhodopirellula baltica (strain DSM 10527 / NCIMB 13988 / SH1).